Reading from the N-terminus, the 488-residue chain is Long chain base biosynthesis protein 2a (488 aa).

Residues 4 to 24 (LPYTTALTTLFSYGLLFAFGQ) traverse the membrane as a helical segment. Lys311 carries the post-translational modification N6-(pyridoxal phosphate)lysine.

This sequence belongs to the class-II pyridoxal-phosphate-dependent aminotransferase family. As to quaternary structure, heterodimer with LCB1. Component of the serine palmitoyltransferase (SPT) complex, composed of LCB1 and LCB2. Pyridoxal 5'-phosphate is required as a cofactor.

Its subcellular location is the endoplasmic reticulum membrane. It carries out the reaction L-serine + hexadecanoyl-CoA + H(+) = 3-oxosphinganine + CO2 + CoA. It functions in the pathway lipid metabolism; sphingolipid metabolism. In terms of biological role, serine palmitoyltransferase (SPT). The heterodimer formed with LCB1 constitutes the catalytic core. This Oryza sativa subsp. japonica (Rice) protein is Long chain base biosynthesis protein 2a.